Reading from the N-terminus, the 265-residue chain is MRYYTQVVAASLVATLAVVDSIVFADRGNKLRFLRQDGATVTRGGKGEERTGTAGSVESLTNLANLYFDSNLSSRVIKKMLEEHDGHQPVLAMIEKRFQERGAQKYMYLDEGLVTRETAEKKFIEWILEGKTKKQVKKEFGISSEPGNESAVELQESAIKAYGDWLEDLNGRSWDLENTAASKAFAYLYGKHVSRDWILGMFKAWATEGTPLKVAKNHLFKEPMRPFDMFQEENFVAYVTYAKMLREKIKSISPPRRDPVPTASN.

The N-terminal stretch at 1–25 (MRYYTQVVAASLVATLAVVDSIVFA) is a signal peptide. Residues 32–50 (RFLRQDGATVTRGGKGEER) carry the RxLR-dEER motif. N-linked (GlcNAc...) asparagine glycosylation is found at N71 and N148.

Belongs to the RxLR effector family.

It is found in the secreted. The protein localises to the host nucleus. Its subcellular location is the host cytoplasm. Secreted effector that completely suppresses the host cell death induced by cell death-inducing proteins. This is Secreted RxLR effector protein 146 from Plasmopara viticola (Downy mildew of grapevine).